The following is a 217-amino-acid chain: Monomethylamine corrinoid protein 2 (217 aa).

Residues 1–91 (MTNTEIFDKL…ELEKNKKEGD (91 aa)) form the B12-binding N-terminal domain. Residues 93–217 (AGLAITFVAE…AAKVALEVMK (125 aa)) form the B12-binding domain. Histidine 106 contacts methylcob(III)alamin.

Belongs to the methylamine corrinoid protein family. Can form a complex with MtmB.

It functions in the pathway one-carbon metabolism; methanogenesis from methylamine. Functionally, acts as a methyl group carrier between MtmB and MtbA. The chain is Monomethylamine corrinoid protein 2 (mtmC2) from Methanosarcina barkeri.